A 641-amino-acid chain; its full sequence is 1-deoxy-D-xylulose-5-phosphate synthase (641 aa).

Thiamine diphosphate is bound by residues H79 and 120–122 (AHS). Mg(2+) is bound at residue D151. Thiamine diphosphate-binding positions include 152–153 (GS), N180, Y290, and E372. N180 contributes to the Mg(2+) binding site.

It belongs to the transketolase family. DXPS subfamily. In terms of assembly, homodimer. It depends on Mg(2+) as a cofactor. Thiamine diphosphate serves as cofactor.

The catalysed reaction is D-glyceraldehyde 3-phosphate + pyruvate + H(+) = 1-deoxy-D-xylulose 5-phosphate + CO2. Its pathway is metabolic intermediate biosynthesis; 1-deoxy-D-xylulose 5-phosphate biosynthesis; 1-deoxy-D-xylulose 5-phosphate from D-glyceraldehyde 3-phosphate and pyruvate: step 1/1. Catalyzes the acyloin condensation reaction between C atoms 2 and 3 of pyruvate and glyceraldehyde 3-phosphate to yield 1-deoxy-D-xylulose-5-phosphate (DXP). The chain is 1-deoxy-D-xylulose-5-phosphate synthase from Rhodopseudomonas palustris (strain BisB18).